The following is a 332-amino-acid chain: Phosphate acetyltransferase (332 aa).

The protein belongs to the phosphate acetyltransferase and butyryltransferase family.

It is found in the cytoplasm. The enzyme catalyses acetyl-CoA + phosphate = acetyl phosphate + CoA. It functions in the pathway metabolic intermediate biosynthesis; acetyl-CoA biosynthesis; acetyl-CoA from acetate: step 2/2. The sequence is that of Phosphate acetyltransferase (pta) from Acetivibrio thermocellus (strain ATCC 27405 / DSM 1237 / JCM 9322 / NBRC 103400 / NCIMB 10682 / NRRL B-4536 / VPI 7372) (Clostridium thermocellum).